A 558-amino-acid polypeptide reads, in one-letter code: Dihydroxy-acid dehydratase (558 aa).

Residue Cys51 coordinates [2Fe-2S] cluster. Position 83 (Asp83) interacts with Mg(2+). A [2Fe-2S] cluster-binding site is contributed by Cys124. Positions 125 and 126 each coordinate Mg(2+). Residue Lys126 is modified to N6-carboxylysine. Cys196 lines the [2Fe-2S] cluster pocket. Glu447 is a Mg(2+) binding site. The active-site Proton acceptor is the Ser473.

This sequence belongs to the IlvD/Edd family. As to quaternary structure, homodimer. [2Fe-2S] cluster is required as a cofactor. Mg(2+) serves as cofactor.

It carries out the reaction (2R)-2,3-dihydroxy-3-methylbutanoate = 3-methyl-2-oxobutanoate + H2O. The enzyme catalyses (2R,3R)-2,3-dihydroxy-3-methylpentanoate = (S)-3-methyl-2-oxopentanoate + H2O. It participates in amino-acid biosynthesis; L-isoleucine biosynthesis; L-isoleucine from 2-oxobutanoate: step 3/4. It functions in the pathway amino-acid biosynthesis; L-valine biosynthesis; L-valine from pyruvate: step 3/4. Its function is as follows. Functions in the biosynthesis of branched-chain amino acids. Catalyzes the dehydration of (2R,3R)-2,3-dihydroxy-3-methylpentanoate (2,3-dihydroxy-3-methylvalerate) into 2-oxo-3-methylpentanoate (2-oxo-3-methylvalerate) and of (2R)-2,3-dihydroxy-3-methylbutanoate (2,3-dihydroxyisovalerate) into 2-oxo-3-methylbutanoate (2-oxoisovalerate), the penultimate precursor to L-isoleucine and L-valine, respectively. The sequence is that of Dihydroxy-acid dehydratase from Flavobacterium psychrophilum (strain ATCC 49511 / DSM 21280 / CIP 103535 / JIP02/86).